A 274-amino-acid polypeptide reads, in one-letter code: 2,3,4,5-tetrahydropyridine-2,6-dicarboxylate N-succinyltransferase (274 aa).

The substrate site is built by R107 and D144.

It belongs to the transferase hexapeptide repeat family. In terms of assembly, homotrimer.

The protein resides in the cytoplasm. It carries out the reaction (S)-2,3,4,5-tetrahydrodipicolinate + succinyl-CoA + H2O = (S)-2-succinylamino-6-oxoheptanedioate + CoA. The protein operates within amino-acid biosynthesis; L-lysine biosynthesis via DAP pathway; LL-2,6-diaminopimelate from (S)-tetrahydrodipicolinate (succinylase route): step 1/3. This chain is 2,3,4,5-tetrahydropyridine-2,6-dicarboxylate N-succinyltransferase, found in Cereibacter sphaeroides (strain ATCC 17025 / ATH 2.4.3) (Rhodobacter sphaeroides).